The sequence spans 410 residues: Protein CNPPD1 (410 aa).

The chain crosses the membrane as a helical span at residues 233–253 (CLLAVAYVSSVALAVASVAVI).

The protein belongs to the CNPPD1 family.

It is found in the membrane. This is Protein CNPPD1 (CNPPD1) from Homo sapiens (Human).